The sequence spans 229 residues: Uracil-DNA glycosylase (229 aa).

Asp71 (proton acceptor) is an active-site residue.

Belongs to the uracil-DNA glycosylase (UDG) superfamily. UNG family.

It is found in the cytoplasm. The catalysed reaction is Hydrolyzes single-stranded DNA or mismatched double-stranded DNA and polynucleotides, releasing free uracil.. In terms of biological role, excises uracil residues from the DNA which can arise as a result of misincorporation of dUMP residues by DNA polymerase or due to deamination of cytosine. The protein is Uracil-DNA glycosylase of Campylobacter lari (strain RM2100 / D67 / ATCC BAA-1060).